Reading from the N-terminus, the 418-residue chain is Light-independent protochlorophyllide reductase subunit N (418 aa).

[4Fe-4S] cluster contacts are provided by cysteine 17, cysteine 42, and cysteine 103.

The protein belongs to the BchN/ChlN family. In terms of assembly, protochlorophyllide reductase is composed of three subunits; ChlL, ChlN and ChlB. Forms a heterotetramer of two ChlB and two ChlN subunits. It depends on [4Fe-4S] cluster as a cofactor.

It carries out the reaction chlorophyllide a + oxidized 2[4Fe-4S]-[ferredoxin] + 2 ADP + 2 phosphate = protochlorophyllide a + reduced 2[4Fe-4S]-[ferredoxin] + 2 ATP + 2 H2O. The protein operates within porphyrin-containing compound metabolism; chlorophyll biosynthesis (light-independent). In terms of biological role, component of the dark-operative protochlorophyllide reductase (DPOR) that uses Mg-ATP and reduced ferredoxin to reduce ring D of protochlorophyllide (Pchlide) to form chlorophyllide a (Chlide). This reaction is light-independent. The NB-protein (ChlN-ChlB) is the catalytic component of the complex. This Prochlorococcus marinus (strain AS9601) protein is Light-independent protochlorophyllide reductase subunit N.